Reading from the N-terminus, the 362-residue chain is DNA polymerase IV (362 aa).

Residues 6 to 187 (IIHVDMDAFY…LPVSSFHGVG (182 aa)) enclose the UmuC domain. Mg(2+) is bound by residues aspartate 10 and aspartate 105. Glutamate 106 is an active-site residue.

It belongs to the DNA polymerase type-Y family. Monomer. The cofactor is Mg(2+).

The protein localises to the cytoplasm. The enzyme catalyses DNA(n) + a 2'-deoxyribonucleoside 5'-triphosphate = DNA(n+1) + diphosphate. Functionally, poorly processive, error-prone DNA polymerase involved in untargeted mutagenesis. Copies undamaged DNA at stalled replication forks, which arise in vivo from mismatched or misaligned primer ends. These misaligned primers can be extended by PolIV. Exhibits no 3'-5' exonuclease (proofreading) activity. May be involved in translesional synthesis, in conjunction with the beta clamp from PolIII. This Leptospira interrogans serogroup Icterohaemorrhagiae serovar Lai (strain 56601) protein is DNA polymerase IV.